The primary structure comprises 592 residues: Polyadenylate-binding protein, cytoplasmic and nuclear (592 aa).

The span at Met-1–Glu-10 shows a compositional bias: basic and acidic residues. Residues Met-1–Ser-43 are disordered. Residues Gln-11–Asp-20 are compositionally biased toward polar residues. Low complexity predominate over residues Gln-21–Ser-43. 4 RRM domains span residues Ala-50 to Arg-128, Gly-138 to Pro-215, Thr-231 to Lys-308, and Val-334 to Arg-411. The 80-residue stretch at Asn-507–Lys-586 folds into the PABC domain.

The protein belongs to the polyadenylate-binding protein type-1 family.

The protein localises to the cytoplasm. It localises to the nucleus. Functionally, binds the poly(A) tail of mRNA. Appears to be an important mediator of the multiple roles of the poly(A) tail in mRNA biogenesis, stability and translation. In the nucleus, involved in both mRNA cleavage and polyadenylation. Is also required for efficient mRNA export to the cytoplasm. Acts in concert with a poly(A)-specific nuclease (PAN) to affect poly(A) tail shortening, which may occur concomitantly with either nucleocytoplasmic mRNA transport or translational initiation. In the cytoplasm, stimulates translation initiation and regulates mRNA decay through translation termination-coupled poly(A) shortening, probably mediated by PAN. The chain is Polyadenylate-binding protein, cytoplasmic and nuclear (PAB1) from Kluyveromyces lactis (strain ATCC 8585 / CBS 2359 / DSM 70799 / NBRC 1267 / NRRL Y-1140 / WM37) (Yeast).